Here is a 739-residue protein sequence, read N- to C-terminus: POU domain, class 2, transcription factor 1 (739 aa).

Polar residues predominate over residues 1–11 (MNNPSETSKPS). Disordered stretches follow at residues 1–39 (MNNP…GGPI), 67–95 (SLNV…SVQA), 253–277 (TPIQ…EEPS), 353–378 (DSTL…RRKK), and 489–553 (SVTG…SSPL). Over residues 81-95 (SQQPSQPSQQPSVQA) the composition is skewed to low complexity. In terms of domain architecture, POU-specific spans 274 to 348 (EEPSDLEELE…LLEKWLNDAE (75 aa)). The segment covering 353 to 364 (DSTLSSPSALNS) has biased composition (low complexity). Residues 375 to 434 (RRKKRTSIETNIRVALEKSFLENQKPTSEEITMIADQLNMEKEVIRVWFCNRRQKEKRIN) constitute a DNA-binding region (homeobox). Over residues 489-552 (SVTGTTETTS…QTTSTPLSSP (64 aa)) the composition is skewed to low complexity.

Belongs to the POU transcription factor family. Class-2 subfamily. In terms of assembly, interacts with NR3C1, AR and PGR.

The protein localises to the nucleus. In terms of biological role, transcription factor that binds to the octamer motif (5'-ATTTGCAT-3') and activates the promoters of the genes for some small nuclear RNAs (snRNA) and of genes such as those for histone H2B and immunoglobulins. Modulates transcription transactivation by NR3C1, AR and PGR. In Gallus gallus (Chicken), this protein is POU domain, class 2, transcription factor 1 (POU2F1).